Consider the following 136-residue polypeptide: 6,7-dimethyl-8-ribityllumazine synthase (136 aa).

5-amino-6-(D-ribitylamino)uracil-binding positions include F11, 43–45 (VYD), and 67–69 (CVI). 72-73 (DT) is a binding site for (2S)-2-hydroxy-3-oxobutyl phosphate. Residue H75 is the Proton donor of the active site. L100 contributes to the 5-amino-6-(D-ribitylamino)uracil binding site. Residue R115 coordinates (2S)-2-hydroxy-3-oxobutyl phosphate.

It belongs to the DMRL synthase family. In terms of assembly, forms an icosahedral capsid composed of 60 subunits, arranged as a dodecamer of pentamers.

The enzyme catalyses (2S)-2-hydroxy-3-oxobutyl phosphate + 5-amino-6-(D-ribitylamino)uracil = 6,7-dimethyl-8-(1-D-ribityl)lumazine + phosphate + 2 H2O + H(+). It participates in cofactor biosynthesis; riboflavin biosynthesis; riboflavin from 2-hydroxy-3-oxobutyl phosphate and 5-amino-6-(D-ribitylamino)uracil: step 1/2. Functionally, catalyzes the formation of 6,7-dimethyl-8-ribityllumazine by condensation of 5-amino-6-(D-ribitylamino)uracil with 3,4-dihydroxy-2-butanone 4-phosphate. This is the penultimate step in the biosynthesis of riboflavin. The protein is 6,7-dimethyl-8-ribityllumazine synthase of Methanococcus aeolicus (strain ATCC BAA-1280 / DSM 17508 / OCM 812 / Nankai-3).